Reading from the N-terminus, the 645-residue chain is Threonine--tRNA ligase (645 aa).

In terms of domain architecture, TGS spans 1 to 63; that stretch reads MEQINIQFPD…ETDGSIEIVT (63 aa). The interval 242 to 540 is catalytic; the sequence is DHRKIGKELE…LTEETKGAFP (299 aa). Zn(2+)-binding residues include Cys-336, His-387, and His-517.

Belongs to the class-II aminoacyl-tRNA synthetase family. As to quaternary structure, homodimer. Requires Zn(2+) as cofactor.

Its subcellular location is the cytoplasm. The catalysed reaction is tRNA(Thr) + L-threonine + ATP = L-threonyl-tRNA(Thr) + AMP + diphosphate + H(+). In terms of biological role, catalyzes the attachment of threonine to tRNA(Thr) in a two-step reaction: L-threonine is first activated by ATP to form Thr-AMP and then transferred to the acceptor end of tRNA(Thr). Also edits incorrectly charged L-seryl-tRNA(Thr). This Staphylococcus aureus (strain JH1) protein is Threonine--tRNA ligase.